Reading from the N-terminus, the 369-residue chain is Methylthioribose-1-phosphate isomerase (369 aa).

Substrate is bound by residues 54–56 (RGA), Arg95, and Gln208. Asp249 functions as the Proton donor in the catalytic mechanism. A substrate-binding site is contributed by 259–260 (NK).

Belongs to the eIF-2B alpha/beta/delta subunits family. MtnA subfamily.

It carries out the reaction 5-(methylsulfanyl)-alpha-D-ribose 1-phosphate = 5-(methylsulfanyl)-D-ribulose 1-phosphate. The protein operates within amino-acid biosynthesis; L-methionine biosynthesis via salvage pathway; L-methionine from S-methyl-5-thio-alpha-D-ribose 1-phosphate: step 1/6. In terms of biological role, catalyzes the interconversion of methylthioribose-1-phosphate (MTR-1-P) into methylthioribulose-1-phosphate (MTRu-1-P). The protein is Methylthioribose-1-phosphate isomerase of Desulfatibacillum aliphaticivorans.